The sequence spans 518 residues: Membrane-bound lytic murein transglycosylase F (518 aa).

The signal sequence occupies residues M1–A21. Residues L22–G269 are non-LT domain. Residues D270–N518 form an LT domain region. E314 is an active-site residue.

In the N-terminal section; belongs to the bacterial solute-binding protein 3 family. It in the C-terminal section; belongs to the transglycosylase Slt family.

It is found in the cell outer membrane. It carries out the reaction Exolytic cleavage of the (1-&gt;4)-beta-glycosidic linkage between N-acetylmuramic acid (MurNAc) and N-acetylglucosamine (GlcNAc) residues in peptidoglycan, from either the reducing or the non-reducing ends of the peptidoglycan chains, with concomitant formation of a 1,6-anhydrobond in the MurNAc residue.. Its function is as follows. Murein-degrading enzyme that degrades murein glycan strands and insoluble, high-molecular weight murein sacculi, with the concomitant formation of a 1,6-anhydromuramoyl product. Lytic transglycosylases (LTs) play an integral role in the metabolism of the peptidoglycan (PG) sacculus. Their lytic action creates space within the PG sacculus to allow for its expansion as well as for the insertion of various structures such as secretion systems and flagella. The polypeptide is Membrane-bound lytic murein transglycosylase F (Escherichia coli O157:H7).